A 93-amino-acid chain; its full sequence is Integration host factor subunit beta (93 aa).

The protein belongs to the bacterial histone-like protein family. As to quaternary structure, heterodimer of an alpha and a beta chain.

Functionally, this protein is one of the two subunits of integration host factor, a specific DNA-binding protein that functions in genetic recombination as well as in transcriptional and translational control. The protein is Integration host factor subunit beta of Vibrio vulnificus (strain YJ016).